The chain runs to 58 residues: UPF0391 membrane protein Bxeno_A2959 (58 aa).

Transmembrane regions (helical) follow at residues 4-24 (WALFFAVVAVIAGVLGFTGVA) and 33-53 (FLFIVFVILCVVFLVLGFVVT).

Belongs to the UPF0391 family.

It localises to the cell membrane. The sequence is that of UPF0391 membrane protein Bxeno_A2959 from Paraburkholderia xenovorans (strain LB400).